The following is a 147-amino-acid chain: Probable disulfide formation protein (147 aa).

Residues 9–28 traverse the membrane as a helical segment; sequence NYSLYFAWLTALIATLGSLY. C38 and C41 form a disulfide bridge. Helical transmembrane passes span 43–62 and 69–86; these read YQRV…AYRT and YALP…YQYL. C99 and C106 are disulfide-bonded. Residues 115 to 138 traverse the membrane as a helical segment; the sequence is GFITLPFLGMLATLIMSFFLIMAF.

This sequence belongs to the DsbB family. BdbC subfamily.

The protein resides in the cell inner membrane. In terms of biological role, required for disulfide bond formation in some proteins. In Coxiella burnetii (strain CbuG_Q212) (Coxiella burnetii (strain Q212)), this protein is Probable disulfide formation protein.